The primary structure comprises 618 residues: MIASLIRSRRRSRRCVVYSVFLFGFLALWGSFALALVFLSDMYIGEDQISTQKAIKPIARSNYHVVVGHYNGNLPEDKKRNLTSEELNANLYAPHDDWGEGGAGVSHLTPEQQKLADSTFAVNQFNLLVSDGISVRRSLPEIRKPSCRNMTYPDNLPTTSVIIVYHNEAYSTLLRTVWSVIDRSPKELLKEIILVDDFSDREFLRYPTLDTTLKPLPTDIKIIRSKERVGLIRARMMGAQEAQGDVLTFLDSHCECTKGWLEPLLTRIKLNRKAVPCPVIDIINDNTFQYQKGIEMFRGGFNWNLQFRWYGMPTAMAKQHLLDPTGPIESPTMAGGLFSINRNYFEELGEYDPGMDIWGGENLEMSFRIWQCGGRVEILPCSHVGHVFRKSSPHDFPGKSSGKVLNTNLLRVAEVWMDDWKHYFYKIAPQAHRMRSSIDVSERVELRKKLNCKSFKWYLQNVFQDHFLPTPLDRFGRMTSSSNSSVCLAWTLRSSGIKTASTADCLKIFHKTQLWLYTGDRRIRTDEHLCLSVVQLLHTTSDWKIQLKECAGFDTEYWDFKPKIGRFQNRKTGLCLASPDIFDPTKDEFNPPIVQKCRSSNDRQNWTITEMSWLPEHP.

The Cytoplasmic segment spans residues 1 to 16; it reads MIASLIRSRRRSRRCV. A helical; Signal-anchor for type II membrane protein membrane pass occupies residues 17 to 39; that stretch reads VYSVFLFGFLALWGSFALALVFL. At 40 to 618 the chain is on the lumenal side; that stretch reads SDMYIGEDQI…TEMSWLPEHP (579 aa). N-linked (GlcNAc...) asparagine glycans are attached at residues Asn81 and Asn149. 2 cysteine pairs are disulfide-bonded: Cys147-Cys381 and Cys372-Cys452. Positions 156–267 are catalytic subdomain A; it reads LPTTSVIIVY…KGWLEPLLTR (112 aa). Residues Asp197 and Arg228 each contribute to the substrate site. Residue Asp251 coordinates Mn(2+). Ser252 serves as a coordination point for substrate. A Mn(2+)-binding site is contributed by His253. The tract at residues 327–389 is catalytic subdomain B; it reads PIESPTMAGG…PCSHVGHVFR (63 aa). Substrate is bound at residue Trp358. Residue His386 participates in Mn(2+) binding. Arg389 lines the substrate pocket. Positions 474-609 constitute a Ricin B-type lectin domain; sequence RFGRMTSSSN…SNDRQNWTIT (136 aa). A glycan (N-linked (GlcNAc...) asparagine) is linked at Asn483. 3 disulfide bridges follow: Cys487–Cys505, Cys530–Cys550, and Cys575–Cys597. Asn605 is a glycosylation site (N-linked (GlcNAc...) asparagine).

The protein belongs to the glycosyltransferase 2 family. GalNAc-T subfamily. Mn(2+) serves as cofactor.

It localises to the golgi apparatus membrane. It functions in the pathway protein modification; protein glycosylation. In terms of biological role, probable glycopeptide transferase involved in O-linked oligosaccharide biosynthesis. Glycopeptide transferases catalyze the transfer of an N-acetyl-D-galactosamine residue to an already glycosylated peptide. In contrast to other members of the family, it does not act as a peptide transferase that transfers GalNAc onto serine or threonine residue on peptides that have been tested. Some peptide transferase activity is however not excluded, considering that its appropriate peptide substrate may remain unidentified. The sequence is that of Probable N-acetylgalactosaminyltransferase 6 (gly-6) from Caenorhabditis elegans.